Here is a 131-residue protein sequence, read N- to C-terminus: MRHRHGLRKLNRTSSHRLAMLRNMSNSLFQHELIKTTLPKAKELRKVVEPLITLAKKDTVANRRLAFARLRDRDMVTKLFTELGPRYATRPGGYTRILKFGFRQGDNAPMALVELVDRPEITEAPAEEAAE.

The protein belongs to the bacterial ribosomal protein bL17 family. Part of the 50S ribosomal subunit. Contacts protein L32.

The polypeptide is Large ribosomal subunit protein bL17 (Cupriavidus metallidurans (strain ATCC 43123 / DSM 2839 / NBRC 102507 / CH34) (Ralstonia metallidurans)).